A 320-amino-acid polypeptide reads, in one-letter code: Methionyl-tRNA formyltransferase (320 aa).

114–117 contributes to the (6S)-5,6,7,8-tetrahydrofolate binding site; sequence SLLP.

It belongs to the Fmt family.

The enzyme catalyses L-methionyl-tRNA(fMet) + (6R)-10-formyltetrahydrofolate = N-formyl-L-methionyl-tRNA(fMet) + (6S)-5,6,7,8-tetrahydrofolate + H(+). In terms of biological role, attaches a formyl group to the free amino group of methionyl-tRNA(fMet). The formyl group appears to play a dual role in the initiator identity of N-formylmethionyl-tRNA by promoting its recognition by IF2 and preventing the misappropriation of this tRNA by the elongation apparatus. This Acinetobacter baumannii (strain AB307-0294) protein is Methionyl-tRNA formyltransferase.